Reading from the N-terminus, the 311-residue chain is m7GpppX diphosphatase (311 aa).

Substrate is bound by residues Glu-159, Lys-181, and 242 to 253 (HYQPSFYHLHVH). Positions 249–253 (HLHVH) match the Histidine triad motif motif. The active-site Nucleophile is His-251.

It belongs to the HIT family. In terms of tissue distribution, expressed in neurons in the ventral cord, the nerve ring and the pharynx.

It is found in the nucleus. It catalyses the reaction a 5'-end (N(7)-methyl 5'-triphosphoguanosine)-ribonucleoside in mRNA + H2O = N(7)-methyl-GMP + a 5'-end diphospho-ribonucleoside in mRNA + 2 H(+). It carries out the reaction a 5'-end (N(2),N(2),N(7)-trimethyl 5'-triphosphoguanosine)-ribonucleoside in mRNA + H2O = (N(2),N(2),N(7))-trimethyl-GMP + a 5'-end diphospho-ribonucleoside in mRNA + 2 H(+). Its activity is regulated as follows. The hydrolytic product 7-methylguanosine diphosphate (m7GDP) efficiently inhibits the decapping scavenger activity and acts as a competitive inhibitor in vitro. In terms of biological role, decapping scavenger enzyme that catalyzes the cleavage of a residual cap structure following the degradation of mRNAs of the 3'-&gt;5' exosome-mediated mRNA decay pathway. Hydrolyzes cap analog structures like 7-methylguanosine nucleoside triphosphate (m7GpppG) and tri-methyl guanosine nucleoside triphosphate (m3(2,2,7)GpppG) with up to 2 nucleotide substrates (small capped oligoribonucleotides) and specifically releases 5'-phosphorylated RNA fragments and 7-methylguanosine monophosphate (m7GMP). Does not hydrolyze unmethylated cap analog (GpppG) and shows no decapping activity on intact m7GpppG-capped mRNA molecules. Does not hydrolyze 7-methylguanosine diphosphate (m7GDP) and tri-methylguanosine diphosphate (m3(2,2,7)GDP) to m(7)GMP and m3(2,2,7)GMP, respectively. May also play a role in the 5'-&gt;3 mRNA decay pathway; m7GDP, the downstream product released by the 5'-&gt;3' mRNA mediated decapping activity, may be also converted by dcs-1 to m7GMP. Binds to m7GpppG and strongly to m7GDP. The protein is m7GpppX diphosphatase (dcs-1) of Caenorhabditis elegans.